Consider the following 167-residue polypeptide: Photosystem I assembly protein Ycf3 (167 aa).

TPR repeat units lie at residues 35–68 (AFTY…EVDA), 72–105 (SYIF…NPSL), and 120–153 (GEQA…APTN).

This sequence belongs to the Ycf3 family.

The protein resides in the plastid. Its subcellular location is the chloroplast thylakoid membrane. Functionally, essential for the assembly of the photosystem I (PSI) complex. May act as a chaperone-like factor to guide the assembly of the PSI subunits. The polypeptide is Photosystem I assembly protein Ycf3 (Pleurastrum terricola (Filamentous green alga)).